Reading from the N-terminus, the 359-residue chain is Quinolinate synthase (359 aa).

2 residues coordinate iminosuccinate: His-81 and Ser-99. Position 144 (Cys-144) interacts with [4Fe-4S] cluster. Residues 170–172 (YVN) and Ser-187 contribute to the iminosuccinate site. Cys-229 lines the [4Fe-4S] cluster pocket. Iminosuccinate is bound by residues 255 to 257 (HPE) and Thr-272. Residue Cys-315 coordinates [4Fe-4S] cluster.

The protein belongs to the quinolinate synthase family. Type 2 subfamily. Requires [4Fe-4S] cluster as cofactor.

The protein resides in the cytoplasm. The catalysed reaction is iminosuccinate + dihydroxyacetone phosphate = quinolinate + phosphate + 2 H2O + H(+). The protein operates within cofactor biosynthesis; NAD(+) biosynthesis; quinolinate from iminoaspartate: step 1/1. Functionally, catalyzes the condensation of iminoaspartate with dihydroxyacetone phosphate to form quinolinate. The polypeptide is Quinolinate synthase (Sinorhizobium fredii (strain NBRC 101917 / NGR234)).